The primary structure comprises 611 residues: UvrABC system protein C (611 aa).

Residues 14-91 enclose the GIY-YIG domain; it reads TSPGCYIHKD…IKENQPKYNI (78 aa). Positions 196–231 constitute a UVR domain; sequence DQIIEDLRGKMAGAAQAMEFEKAAEYRDLIQSIGTL. The tract at residues 587–611 is disordered; that stretch reads KLNPKTQEQEQAQLREVAEPQIGLE.

The protein belongs to the UvrC family. In terms of assembly, interacts with UvrB in an incision complex.

The protein resides in the cytoplasm. Its function is as follows. The UvrABC repair system catalyzes the recognition and processing of DNA lesions. UvrC both incises the 5' and 3' sides of the lesion. The N-terminal half is responsible for the 3' incision and the C-terminal half is responsible for the 5' incision. The sequence is that of UvrABC system protein C from Streptococcus sanguinis (strain SK36).